Reading from the N-terminus, the 240-residue chain is Protein GrpE (240 aa).

Disordered stretches follow at residues 1 to 54 (MSGD…NEAR) and 206 to 240 (VSMG…DGNG). Positions 215–233 (GASSQPAEAPAADAPAEDS) are enriched in low complexity.

Belongs to the GrpE family. In terms of assembly, homodimer.

The protein localises to the cytoplasm. Participates actively in the response to hyperosmotic and heat shock by preventing the aggregation of stress-denatured proteins, in association with DnaK and GrpE. It is the nucleotide exchange factor for DnaK and may function as a thermosensor. Unfolded proteins bind initially to DnaJ; upon interaction with the DnaJ-bound protein, DnaK hydrolyzes its bound ATP, resulting in the formation of a stable complex. GrpE releases ADP from DnaK; ATP binding to DnaK triggers the release of the substrate protein, thus completing the reaction cycle. Several rounds of ATP-dependent interactions between DnaJ, DnaK and GrpE are required for fully efficient folding. In Synechococcus sp. (strain WH7803), this protein is Protein GrpE.